Here is a 361-residue protein sequence, read N- to C-terminus: Peptide chain release factor 1 (361 aa).

Position 237 is an N5-methylglutamine (Gln237). A disordered region spans residues 285 to 306; sequence QAEQSAQQTEQRRQLVGSGDRS.

The protein belongs to the prokaryotic/mitochondrial release factor family. In terms of processing, methylated by PrmC. Methylation increases the termination efficiency of RF1.

The protein localises to the cytoplasm. Functionally, peptide chain release factor 1 directs the termination of translation in response to the peptide chain termination codons UAG and UAA. The chain is Peptide chain release factor 1 from Alkalilimnicola ehrlichii (strain ATCC BAA-1101 / DSM 17681 / MLHE-1).